The chain runs to 151 residues: Large ribosomal subunit protein bL9 (151 aa).

Belongs to the bacterial ribosomal protein bL9 family.

Its function is as follows. Binds to the 23S rRNA. The chain is Large ribosomal subunit protein bL9 from Lacticaseibacillus casei (strain BL23) (Lactobacillus casei).